Here is a 190-residue protein sequence, read N- to C-terminus: ATP-dependent Clp protease proteolytic subunit 2 (190 aa).

Ser-98 functions as the Nucleophile in the catalytic mechanism. The active site involves His-123.

Belongs to the peptidase S14 family. In terms of assembly, fourteen ClpP subunits assemble into 2 heptameric rings which stack back to back to give a disk-like structure with a central cavity, resembling the structure of eukaryotic proteasomes.

The protein resides in the cytoplasm. It carries out the reaction Hydrolysis of proteins to small peptides in the presence of ATP and magnesium. alpha-casein is the usual test substrate. In the absence of ATP, only oligopeptides shorter than five residues are hydrolyzed (such as succinyl-Leu-Tyr-|-NHMec, and Leu-Tyr-Leu-|-Tyr-Trp, in which cleavage of the -Tyr-|-Leu- and -Tyr-|-Trp bonds also occurs).. Its function is as follows. Cleaves peptides in various proteins in a process that requires ATP hydrolysis. Has a chymotrypsin-like activity. Plays a major role in the degradation of misfolded proteins. The protein is ATP-dependent Clp protease proteolytic subunit 2 of Bacillus licheniformis (strain ATCC 14580 / DSM 13 / JCM 2505 / CCUG 7422 / NBRC 12200 / NCIMB 9375 / NCTC 10341 / NRRL NRS-1264 / Gibson 46).